Reading from the N-terminus, the 178-residue chain is Sec-independent protein translocase protein TatB (178 aa).

Residues 1 to 21 traverse the membrane as a helical segment; that stretch reads MFDIGWSELLVIGVVALIAIG. A disordered region spans residues 146–178; the sequence is LAIVREIKPEPQPQPADGAAPAEPERLKDAKAS. The span at 168–178 shows a compositional bias: basic and acidic residues; that stretch reads EPERLKDAKAS.

This sequence belongs to the TatB family. As to quaternary structure, the Tat system comprises two distinct complexes: a TatABC complex, containing multiple copies of TatA, TatB and TatC subunits, and a separate TatA complex, containing only TatA subunits. Substrates initially bind to the TatABC complex, which probably triggers association of the separate TatA complex to form the active translocon.

It is found in the cell inner membrane. Part of the twin-arginine translocation (Tat) system that transports large folded proteins containing a characteristic twin-arginine motif in their signal peptide across membranes. Together with TatC, TatB is part of a receptor directly interacting with Tat signal peptides. TatB may form an oligomeric binding site that transiently accommodates folded Tat precursor proteins before their translocation. This chain is Sec-independent protein translocase protein TatB, found in Bradyrhizobium sp. (strain ORS 278).